The chain runs to 1400 residues: DNA-directed RNA polymerase subunit beta' (1400 aa).

Residues Cys-70, Cys-72, Cys-85, and Cys-88 each contribute to the Zn(2+) site. Positions 460, 462, and 464 each coordinate Mg(2+). Cys-814, Cys-889, Cys-896, and Cys-899 together coordinate Zn(2+).

The protein belongs to the RNA polymerase beta' chain family. As to quaternary structure, the RNAP catalytic core consists of 2 alpha, 1 beta, 1 beta' and 1 omega subunit. When a sigma factor is associated with the core the holoenzyme is formed, which can initiate transcription. The cofactor is Mg(2+). Zn(2+) is required as a cofactor.

It carries out the reaction RNA(n) + a ribonucleoside 5'-triphosphate = RNA(n+1) + diphosphate. DNA-dependent RNA polymerase catalyzes the transcription of DNA into RNA using the four ribonucleoside triphosphates as substrates. This is DNA-directed RNA polymerase subunit beta' from Alcanivorax borkumensis (strain ATCC 700651 / DSM 11573 / NCIMB 13689 / SK2).